The following is a 424-amino-acid chain: MKLEMICTGEEVLAGQIVDTNAAWFASTMMEHGVEIQRRVTVGDRLEDLIAVFQERSLHADVILVNGGLGPTSDDMSALAMAKAKGEPLVENVEWRERLEEWFTRNNREMPLSNLKQAMLPASAVMVDNPVGTACGFRVKLNRAWLFFTPGVPFELKHMVTEQFVPFIRDEFNLDSKVALKKLLTIGQGESALADKLEPLELPEGITIGYRSSMPHIEIKIFARGEKAIAVLPRVAGHIKMVLGTAVVAEDKATLAEEIHYKLLNSGLTLSVAESCTGGMITSQLVDFSGSSSYLQHGLVTYSNESKVRVLGVNPSTLDDHGAVSIATVEEMAKGARQILDSDYALATSGIAGPDGGTDEKPVGTVAIALATRGGVYSQMIKLPRRSRDLVRSLSAAVAYDMLRRELLAEAVIVDYQSIGRFSK.

The protein belongs to the CinA family.

This chain is CinA-like protein, found in Shewanella baltica (strain OS155 / ATCC BAA-1091).